The primary structure comprises 100 residues: Urease subunit gamma (100 aa).

Belongs to the urease gamma subunit family. Heterotrimer of UreA (gamma), UreB (beta) and UreC (alpha) subunits. Three heterotrimers associate to form the active enzyme.

Its subcellular location is the cytoplasm. The catalysed reaction is urea + 2 H2O + H(+) = hydrogencarbonate + 2 NH4(+). It participates in nitrogen metabolism; urea degradation; CO(2) and NH(3) from urea (urease route): step 1/1. The chain is Urease subunit gamma from Citrobacter koseri (strain ATCC BAA-895 / CDC 4225-83 / SGSC4696).